A 602-amino-acid chain; its full sequence is Elongation factor 4 (602 aa).

Residues 7–189 (KKIRNFSIIA…SIVKNVPSPK (183 aa)) enclose the tr-type G domain. GTP contacts are provided by residues 19–24 (DHGKST) and 136–139 (NKID).

The protein belongs to the TRAFAC class translation factor GTPase superfamily. Classic translation factor GTPase family. LepA subfamily.

The protein resides in the cell membrane. The enzyme catalyses GTP + H2O = GDP + phosphate + H(+). Its function is as follows. Required for accurate and efficient protein synthesis under certain stress conditions. May act as a fidelity factor of the translation reaction, by catalyzing a one-codon backward translocation of tRNAs on improperly translocated ribosomes. Back-translocation proceeds from a post-translocation (POST) complex to a pre-translocation (PRE) complex, thus giving elongation factor G a second chance to translocate the tRNAs correctly. Binds to ribosomes in a GTP-dependent manner. In Alkaliphilus oremlandii (strain OhILAs) (Clostridium oremlandii (strain OhILAs)), this protein is Elongation factor 4.